The primary structure comprises 663 residues: UvrABC system protein B (663 aa).

The span at 1-10 (MIDKRDDKPF) shows a compositional bias: basic and acidic residues. The disordered stretch occupies residues 1-23 (MIDKRDDKPFKLKSKYKPSGDQP). One can recognise a Helicase ATP-binding domain in the interval 31–271 (DNIEGGEKAQ…EQSIAKIQAE (241 aa)). 44–51 (GATGTGKT) contacts ATP. Residues 97–120 (YYDYYQPEAYVPSSDTYIEKDSSV) carry the Beta-hairpin motif. The region spanning 435–601 (QMDDLLGEIN…TIKKDIRGLI (167 aa)) is the Helicase C-terminal domain. The UVR domain maps to 627 to 662 (KEAINALQKQMQEAAELLDFELAAQMRDLILELKLM).

This sequence belongs to the UvrB family. As to quaternary structure, forms a heterotetramer with UvrA during the search for lesions. Interacts with UvrC in an incision complex.

It is found in the cytoplasm. Its function is as follows. The UvrABC repair system catalyzes the recognition and processing of DNA lesions. A damage recognition complex composed of 2 UvrA and 2 UvrB subunits scans DNA for abnormalities. Upon binding of the UvrA(2)B(2) complex to a putative damaged site, the DNA wraps around one UvrB monomer. DNA wrap is dependent on ATP binding by UvrB and probably causes local melting of the DNA helix, facilitating insertion of UvrB beta-hairpin between the DNA strands. Then UvrB probes one DNA strand for the presence of a lesion. If a lesion is found the UvrA subunits dissociate and the UvrB-DNA preincision complex is formed. This complex is subsequently bound by UvrC and the second UvrB is released. If no lesion is found, the DNA wraps around the other UvrB subunit that will check the other stand for damage. In Streptococcus pyogenes serotype M2 (strain MGAS10270), this protein is UvrABC system protein B.